The primary structure comprises 810 residues: Capsid protein VP1 (810 aa).

Disordered stretches follow at residues Gln-316–Thr-366 and Ala-373–Gly-392. Polar residues predominate over residues Pro-348–Thr-366. A compositionally biased stretch (gly residues) spans Thr-379–Thr-390.

It localises to the virion. Its function is as follows. Capsid protein self-assembles to form an icosahedral capsid with a T=1 symmetry, about 22 nm in diameter, and consisting of 60 copies of size variants of the capsid protein which differ in the N-terminus. The capsid encapsulates the genomic ssDNA. Capsid proteins are responsible for the attachment to host cell receptors. This attachment induces virion internalization predominantly through clathrin-dependent endocytosis. This is Capsid protein VP1 (VP) from Junonia coenia densovirus (isolate pBRJ/1990) (JcDNV).